Consider the following 32-residue polypeptide: Delta-conotoxin-like CnVIB (32 aa).

Intrachain disulfides connect Cys-3-Cys-18, Cys-10-Cys-22, and Cys-17-Cys-27. A 4-hydroxyproline mark is found at Pro-6 and Pro-14.

Belongs to the conotoxin O1 superfamily. Expressed by the venom duct.

The protein resides in the secreted. Delta-conotoxins bind to site 6 of voltage-gated sodium channels (Nav) and inhibit the inactivation process. This toxin acts on Nav1.4/SCN4A and Nav1.6/SCN8A (EC(50)=2.3 uM). The polypeptide is Delta-conotoxin-like CnVIB (Conus consors (Singed cone)).